Consider the following 396-residue polypeptide: Elongation factor Tu 2 (396 aa).

The tr-type G domain maps to 10–206 (KPHINVGTIG…VLDSYIPEPQ (197 aa)). Positions 19 to 26 (GHVDHGKT) are G1. 19–26 (GHVDHGKT) is a GTP binding site. T26 lines the Mg(2+) pocket. A G2 region spans residues 60–64 (GITIN). Positions 81–84 (DCPG) are G3. Residues 81–85 (DCPGH) and 136–139 (NKAD) each bind GTP. The tract at residues 136-139 (NKAD) is G4. Residues 174–176 (SAL) form a G5 region.

Belongs to the TRAFAC class translation factor GTPase superfamily. Classic translation factor GTPase family. EF-Tu/EF-1A subfamily. Monomer.

It localises to the cytoplasm. The enzyme catalyses GTP + H2O = GDP + phosphate + H(+). GTP hydrolase that promotes the GTP-dependent binding of aminoacyl-tRNA to the A-site of ribosomes during protein biosynthesis. The sequence is that of Elongation factor Tu 2 from Nitrosomonas eutropha (strain DSM 101675 / C91 / Nm57).